Here is a 356-residue protein sequence, read N- to C-terminus: S-adenosylmethionine:tRNA ribosyltransferase-isomerase (356 aa).

This sequence belongs to the QueA family. Monomer.

It localises to the cytoplasm. It carries out the reaction 7-aminomethyl-7-carbaguanosine(34) in tRNA + S-adenosyl-L-methionine = epoxyqueuosine(34) in tRNA + adenine + L-methionine + 2 H(+). It participates in tRNA modification; tRNA-queuosine biosynthesis. Transfers and isomerizes the ribose moiety from AdoMet to the 7-aminomethyl group of 7-deazaguanine (preQ1-tRNA) to give epoxyqueuosine (oQ-tRNA). This Escherichia coli O6:H1 (strain CFT073 / ATCC 700928 / UPEC) protein is S-adenosylmethionine:tRNA ribosyltransferase-isomerase.